The sequence spans 492 residues: Pre-mRNA-processing factor 19 (492 aa).

A U-box domain is found at 1-72 (MSFVCGISGE…APRNVSGTSI (72 aa)). WD repeat units follow at residues 207-246 (HSTG…VMQT), 249-288 (GHNK…SKAI), 291-330 (VHQA…SLCK), 336-375 (GSQI…VAAA), 378-417 (GHTA…NLKT), and 461-491 (DHSG…RVFS).

The protein belongs to the WD repeat PRP19 family. As to quaternary structure, homotetramer. Component of the NTC complex (or PRP19-associated complex) which is associated with the spliceosome.

The protein resides in the nucleus. Its subcellular location is the nucleoplasm. It catalyses the reaction S-ubiquitinyl-[E2 ubiquitin-conjugating enzyme]-L-cysteine + [acceptor protein]-L-lysine = [E2 ubiquitin-conjugating enzyme]-L-cysteine + N(6)-ubiquitinyl-[acceptor protein]-L-lysine.. It functions in the pathway protein modification; protein ubiquitination. Probable ubiquitin-protein ligase which is mainly involved pre-mRNA splicing and DNA repair. Core component of the NTC/Nineteen complex which is part of the spliceosome and participates in its assembly, its remodeling and is required for its activity. Together with emb-4, necessary for interaction of rnp-4, a probable exon junction complex component, with mRNAs and spliceosomal snRNAs. Plays a role in nuclear retention of unspliced mRNAs. The sequence is that of Pre-mRNA-processing factor 19 (prp-19) from Caenorhabditis elegans.